Consider the following 237-residue polypeptide: Aliphatic sulfonates import ATP-binding protein SsuB 1 (237 aa).

Positions 5–221 constitute an ABC transporter domain; the sequence is LMNIRVDRKA…PRDRRDPLLA (217 aa). Residue 38–45 coordinates ATP; it reads GPSGCGKS.

This sequence belongs to the ABC transporter superfamily. Aliphatic sulfonates importer (TC 3.A.1.17.2) family. As to quaternary structure, the complex is composed of two ATP-binding proteins (SsuB), two transmembrane proteins (SsuC) and a solute-binding protein (SsuA).

Its subcellular location is the cell inner membrane. It catalyses the reaction ATP + H2O + aliphatic sulfonate-[sulfonate-binding protein]Side 1 = ADP + phosphate + aliphatic sulfonateSide 2 + [sulfonate-binding protein]Side 1.. Its function is as follows. Part of the ABC transporter complex SsuABC involved in aliphatic sulfonates import. Responsible for energy coupling to the transport system. This is Aliphatic sulfonates import ATP-binding protein SsuB 1 from Pseudomonas savastanoi pv. phaseolicola (strain 1448A / Race 6) (Pseudomonas syringae pv. phaseolicola (strain 1448A / Race 6)).